Reading from the N-terminus, the 360-residue chain is MIYWLADLLEPSYPFFRLFEYLTFRAIMSVLTALILSLWMGPRLIARLQMLQIGQVVRNDGPESHFSKRGTPTMGGIMILAAITITALLWTDLSNPYIWAVLAVMLGYGVVGFVDDYRKVVHKNSDGLIARWKYFWQSVIALVIAFALYMHGKDTAATQLVVPFFKDVMPQLGLLYIVLTYFVIVGTSNAVNLTDGLDGLAIMPTVMVAGGMAFIAWATGNVNFAEYLHIPYLKDTSELVVLCTAIVGAGLGFLWFNTYPAQVFMGDVGSLALGGALGTIAVLVRQELLLVIMGGVFVMETVSVILQVGSYKLRGQRIFRMAPIHHHYELKGWPEPRVIVRFWIITLMLVLIALATLKVR.

The next 10 membrane-spanning stretches (helical) occupy residues 26–46, 70–90, 94–114, 132–152, 168–188, 199–219, 239–259, 263–283, 288–308, and 338–358; these read AIMS…RLIA, GTPT…ALLW, SNPY…VGFV, WKYF…YMHG, VMPQ…VGTS, GLAI…AWAT, LVVL…FNTY, VFMG…IAVL, LLLV…ILQV, and VIVR…ATLK.

This sequence belongs to the glycosyltransferase 4 family. MraY subfamily. The cofactor is Mg(2+).

Its subcellular location is the cell inner membrane. The catalysed reaction is UDP-N-acetyl-alpha-D-muramoyl-L-alanyl-gamma-D-glutamyl-meso-2,6-diaminopimeloyl-D-alanyl-D-alanine + di-trans,octa-cis-undecaprenyl phosphate = di-trans,octa-cis-undecaprenyl diphospho-N-acetyl-alpha-D-muramoyl-L-alanyl-D-glutamyl-meso-2,6-diaminopimeloyl-D-alanyl-D-alanine + UMP. It functions in the pathway cell wall biogenesis; peptidoglycan biosynthesis. Catalyzes the initial step of the lipid cycle reactions in the biosynthesis of the cell wall peptidoglycan: transfers peptidoglycan precursor phospho-MurNAc-pentapeptide from UDP-MurNAc-pentapeptide onto the lipid carrier undecaprenyl phosphate, yielding undecaprenyl-pyrophosphoryl-MurNAc-pentapeptide, known as lipid I. The sequence is that of Phospho-N-acetylmuramoyl-pentapeptide-transferase from Photobacterium profundum (strain SS9).